Consider the following 374-residue polypeptide: Type II methyltransferase M.NgoFVII (374 aa).

Residues 16–344 (PKILSLFSGC…KSILPIFSDN (329 aa)) enclose the SAM-dependent MTase C5-type domain. C88 is a catalytic residue.

It belongs to the class I-like SAM-binding methyltransferase superfamily. C5-methyltransferase family.

It catalyses the reaction a 2'-deoxycytidine in DNA + S-adenosyl-L-methionine = a 5-methyl-2'-deoxycytidine in DNA + S-adenosyl-L-homocysteine + H(+). Functionally, a methylase, recognizes the double-stranded sequence 5'-GCSGC-3', methylates C-5 on both strands, and protects the DNA from cleavage by the NgoFVII endonuclease. The protein is Type II methyltransferase M.NgoFVII (ngoFVIIM) of Neisseria gonorrhoeae.